A 352-amino-acid polypeptide reads, in one-letter code: C-C chemokine receptor type 5 (352 aa).

Residues 1–30 lie on the Extracellular side of the membrane; that stretch reads MDYQVSSPTYDIDYYTSEPCQKVNVKQIAA. Y3 carries the sulfotyrosine modification. 2 O-linked (GalNAc...) serine glycosylation sites follow: S6 and S7. Y10, Y14, and Y15 each carry sulfotyrosine. 2 cysteine pairs are disulfide-bonded: C20/C269 and C101/C178. Residues 31-58 form a helical membrane-spanning segment; that stretch reads RLLPPLYSLVFIFGFVGNILVVLILINC. Over 59–68 the chain is Cytoplasmic; sequence KRLKSMTDIY. A helical transmembrane segment spans residues 69 to 89; sequence LLNLAISDLFFLLTVPFWAHY. Residues 90–102 are Extracellular-facing; that stretch reads AAAQWDFGNTMCQ. A helical transmembrane segment spans residues 103 to 124; the sequence is LLTGLYFIGFFSGIFFIILLTI. Topologically, residues 125–141 are cytoplasmic; it reads DRYLAIVHAVFALKART. A helical membrane pass occupies residues 142 to 166; the sequence is VTFGVVTSVITWVVAVFASLPGIIF. Residues 167–198 are Extracellular-facing; that stretch reads TRSQREGLHYTCSSHFPYSQYQFWKNFQTLKI. The helical transmembrane segment at 199–218 threads the bilayer; that stretch reads VILGLVLPLLVMVICYSGIL. Residues 219–235 are Cytoplasmic-facing; it reads KTLLRCRNEKKRHRAVR. A helical membrane pass occupies residues 236 to 260; the sequence is LIFTIMIVYFLFWAPYNIVLLLNTF. The Extracellular portion of the chain corresponds to 261–277; sequence QEFFGLNNCSSSNRLDQ. Residues 278–301 form a helical membrane-spanning segment; that stretch reads AMQVTETLGMTHCCINPIIYAFVG. At 302 to 352 the chain is on the cytoplasmic side; that stretch reads EKFRNYLLVFFQKHIAKRFCKCCSIFQQEAPERASSVYTRSTGEQETSVGL. S-palmitoyl cysteine attachment occurs at residues C321, C323, and C324. S336, S337, S342, and S349 each carry phosphoserine; by BARK1.

This sequence belongs to the G-protein coupled receptor 1 family. As to quaternary structure, interacts with PRAF2. Efficient ligand binding to CCL3/MIP-1alpha and CCL4/MIP-1beta requires sulfation, O-glycosylation and sialic acid modifications. Glycosylation on Ser-6 is required for efficient binding of CCL4. Interacts with GRK2. Interacts with ARRB1 and ARRB2. Interacts with CNIH4. Interacts with S100A4; this interaction stimulates T-lymphocyte chemotaxis. Sulfated on at least 2 of the N-terminal tyrosines. Sulfation is required for efficient binding of the chemokines, CCL3 and CCL4. In terms of processing, palmitoylation in the C-terminal is important for cell surface expression. Post-translationally, phosphorylation on serine residues in the C-terminal is stimulated by binding CC chemokines especially by APO-RANTES. O-glycosylated, but not N-glycosylated. Ser-6 appears to be the major site even if Ser-7 may be also O-glycosylated. Also sialylated glycans present which contribute to chemokine binding. Thr-16 and Ser-17 may also be glycosylated and, if so, with small moieties such as a T-antigen.

Its subcellular location is the cell membrane. Functionally, receptor for a number of inflammatory CC-chemokines including CCL3/MIP-1-alpha, CCL4/MIP-1-beta and RANTES and subsequently transduces a signal by increasing the intracellular calcium ion level. May play a role in the control of granulocytic lineage proliferation or differentiation. Participates in T-lymphocyte migration to the infection site by acting as a chemotactic receptor. In Trachypithecus francoisi (Francois' leaf monkey), this protein is C-C chemokine receptor type 5 (CCR5).